Consider the following 596-residue polypeptide: Endoribonuclease ZC3H12A (596 aa).

2 disordered regions span residues 1-48 (MSDP…TSEL) and 97-134 (QALTAPSPQPPLVPRGGSTPKPSTLEPSLPEEDREGSD). Polar residues predominate over residues 10–19 (VQESNPTMSL). The interval 42–87 (EAPTSELQMKVDFFRKLGYSSSEIHSVLQKLGVQADTNTVLGELVK) is ubiquitin association domain. A necessary for interaction with TANK region spans residues 81–150 (VLGELVKHGS…DGSNVAMSHG (70 aa)). Residues 112 to 281 (GGSTPKPSTL…DKFMPPDDPL (170 aa)) are RNase. Residues 135-290 (LRPVVIDGSN…LGRHGPSLDN (156 aa)) form the RNase NYN domain. An RNA binding region spans residues 214-220 (RRVGGKR). Asp226 serves as a coordination point for Mg(2+). 2 disordered regions span residues 278–306 (DDPLGRHGPSLDNFLRKKPLPSEHRKQPC) and 340–417 (NALL…PTEW). Residues 301–324 (HRKQPCPYGKKCTYGIKCRFFHPE) form a C3H1-type zinc finger. The tract at residues 301-454 (HRKQPCPYGK…SELWGVRGGS (154 aa)) is necessary for interaction with ZC3H12D. Phosphoserine is present on Ser344. A compositionally biased stretch (low complexity) spans 356-368 (QRPSPASQSSSVS). 2 positions are modified to phosphoserine: Ser435 and Ser439. Positions 511-543 (YWSEPYPLPPPTPVLQEPQRPSPGAGGGPWGRV) are disordered. The span at 524-533 (VLQEPQRPSP) shows a compositional bias: low complexity.

Belongs to the ZC3H12 family. In terms of assembly, oligomer. Found in a deubiquitination complex with TANK, USP10 and ZC3H12A; this complex inhibits genotoxic stress- or interleukin-1-beta-mediated NF-kappaB activation by promoting IKBKG or TRAF6 deubiquitination. Interacts with IKBKG; this interaction increases in response to DNA damage. Interacts with TANK; this interaction increases in response to DNA damage and serves as a bridge to anchor both TANK and USP10 into a deubiquitinating complex. Interacts with TRAF6; this interaction increases in response to DNA damage and is stimulated by TANK. Interacts with USP10; this interaction increases in response to DNA damage and serves as a bridge to anchor both TANK and USP10 into a deubiquitinating complex. Interacts with ZC3H12D. Interacts with TNRC6A. Interacts with IKBKB/IKKB. Interacts with IKBKB/IKKB. Interacts with IKBKB/IKKB. Interacts with BTRC; the interaction occurs when ZC3H12A is phosphorylated in a IKBKB/IKKB-dependent manner. Interacts with IRAK1; this interaction increases the interaction between ZC3H12A and IKBKB/IKKB. Interacts with UPF1; this interaction occurs in a mRNA translationally active- and termination-dependent manner and is essential for ZC3H12A-mediated degradation of target mRNAs. Associates with ribosomes. Interacts with ubiquitin. It depends on Mg(2+) as a cofactor. In terms of processing, proteolytically cleaved between Arg-111 and Arg-214 by MALT1 in activated T-cells; cleavage at Arg-111 is critical for promoting ZC3H12A degradation in response to T-cell receptor (TCR) stimulation, and hence is necessary for prolonging the stability of a set of mRNAs controlling T-cell activation and Th17 cell differentiation. Post-translationally, phosphorylated by IRAK1; phosphorylation is necessary for subsequent phosphorylation by the I-kappa-B-kinase (IKK) complex. Phosphorylated by I-kappa-B-kinases (IKKs) at Ser-435 and Ser-439 upon lipopolysaccharide (LPS) or IL1B stimulation in macrophages through the MyD88-dependent signaling pathway; these phosphorylations promote rapid ubiquitin proteasome-mediated degradation of ZC3H12A in macrophages and hence allows its target mRNAs, such as IL6, to escape from degradation and accumulate during the inflammatory response. Ubiquitinated; ubiquitination is induced in response to interleukin IL1 receptor stimuli in a IKBKB/IKKB and IRAK1-dependent manner, leading to proteasome-mediated degradation. As to expression, expressed in CD4(+) helper T-cells (at protein level). Highly expressed in macrophages. Expressed in lung, lymph nodes, spleen and thymus. Expressed weakly in heart. Expressed weakly in cardiomyocytes (at protein level). Expressed in spleen, lung, intestine, brown adipose tissue and thymus. Weakly expressed in the heart. Weakly expressed in cardiomyocytes.

It is found in the nucleus. The protein localises to the cytoplasm. It localises to the rough endoplasmic reticulum membrane. Its subcellular location is the cytoplasmic granule. The protein resides in the P-body. Endoribonuclease involved in various biological functions such as cellular inflammatory response and immune homeostasis, glial differentiation of neuroprogenitor cells, cell death of cardiomyocytes, adipogenesis and angiogenesis. Functions as an endoribonuclease involved in mRNA decay. Modulates the inflammatory response by promoting the degradation of a set of translationally active cytokine-induced inflammation-related mRNAs, such as IL6 and IL12B, during the early phase of inflammation. Prevents aberrant T-cell-mediated immune reaction by degradation of multiple mRNAs controlling T-cell activation, such as those encoding cytokines (IL6 and IL2), cell surface receptors (ICOS, TNFRSF4 and TNFR2) and transcription factor (REL). Inhibits cooperatively with ZC3H12A the differentiation of helper T cells Th17 in lungs. They repress target mRNA encoding the Th17 cell-promoting factors IL6, ICOS, REL, IRF4, NFKBID and NFKBIZ. The cooperation requires RNA-binding by RC3H1 and the nuclease activity of ZC3H12A. Together with RC3H1, destabilizes TNFRSF4/OX40 mRNA by binding to the conserved stem loop structure in its 3'UTR. Self regulates by destabilizing its own mRNA. Cleaves mRNA harboring a stem-loop (SL), often located in their 3'-UTRs, during the early phase of inflammation in a helicase UPF1-dependent manner. Plays a role in the inhibition of microRNAs (miRNAs) biogenesis. Cleaves the terminal loop of a set of precursor miRNAs (pre-miRNAs) important for the regulation of the inflammatory response leading to their degradation, and thus preventing the biosynthesis of mature miRNAs. Also plays a role in promoting angiogenesis in response to inflammatory cytokines by inhibiting the production of antiangiogenic microRNAs via its anti-dicer RNase activity. Affects the overall ubiquitination of cellular proteins. Positively regulates deubiquitinase activity promoting the cleavage at 'Lys-48'- and 'Lys-63'-linked polyubiquitin chains on TNF receptor-associated factors (TRAFs), preventing JNK and NF-kappa-B signaling pathway activation, and hence negatively regulating macrophage-mediated inflammatory response and immune homeostasis. Induces also deubiquitination of the transcription factor HIF1A, probably leading to its stabilization and nuclear import, thereby positively regulating the expression of proangiogenic HIF1A-targeted genes. Involved in a TANK-dependent negative feedback response to attenuate NF-kappaB activation through the deubiquitination of IKBKG or TRAF6 in response to interleukin-1-beta (IL1B) stimulation or upon DNA damage. Prevents stress granules (SGs) formation and promotes macrophage apoptosis under stress conditions, including arsenite-induced oxidative stress, heat shock, and energy deprivation. Plays a role in the regulation of macrophage polarization; promotes IL4-induced polarization of macrophages M1 into anti-inflammatory M2 state. May also act as a transcription factor that regulates the expression of multiple genes involved in inflammatory response, angiogenesis, adipogenesis and apoptosis. Functions as a positive regulator of glial differentiation of neuroprogenitor cells through an amyloid precursor protein (APP)-dependent signaling pathway. Attenuates septic myocardial contractile dysfunction in response to lipopolysaccharide (LPS) by reducing I-kappa-B-kinase (IKK)-mediated NF-kappa-B activation, and hence myocardial pro-inflammatory cytokine production. This chain is Endoribonuclease ZC3H12A, found in Mus musculus (Mouse).